Consider the following 496-residue polypeptide: MSEEHVHLDESEVYHIRKQKLAELRTSGFNFPNTFRREHLADALLKQYSETEKQTLEQKHVKVSVAGRIVLRRIMGKASFFHIQDVSGRIQVYLRSNDLPDVYEQFKHWDLGDIVGVQGELFKTNTGELTINAEYVELLTKSLRPLPDKFHGLADQELKYRKRYVDLIANEDSRKTFLIRSHLIKAFREFMDDNHFLEVETPMMHPIPGGALARPFVTHHNTLDMTMYLRIAPELYLKRLVVGGFERVYEINRNFRNEGISTRHNPEFTMLEFYQAYADYNDLMNFTEQLFHYLCDKVLATRQIEYQGQVIDFNKPFERLSVKEAILKYHPDIKAQQLETLEGCRTLLNDLGLPYKETDGLGKLQIILFEETVEHQLFQPTFITEYPTEISPLARRSDTNPEVTDRFEFFIAGREIANGFSELNDAEDQAERFRKQVEEKDAGDLEAMHFDSDYIEALEYGLPPTAGEGIGIDRLVMLFTNSQSIRDVILFPHLRQ.

Residues Glu408 and Glu415 each coordinate Mg(2+).

The protein belongs to the class-II aminoacyl-tRNA synthetase family. Homodimer. It depends on Mg(2+) as a cofactor.

It localises to the cytoplasm. It catalyses the reaction tRNA(Lys) + L-lysine + ATP = L-lysyl-tRNA(Lys) + AMP + diphosphate. The chain is Lysine--tRNA ligase from Legionella pneumophila (strain Paris).